A 113-amino-acid polypeptide reads, in one-letter code: UPF0482 protein YnfB (113 aa).

The N-terminal stretch at 1–28 (MKITLSKRIDLLAFLLPCALALSTTVHA) is a signal peptide.

It belongs to the UPF0482 family.

This is UPF0482 protein YnfB from Escherichia coli O157:H7.